Reading from the N-terminus, the 273-residue chain is Cbp/p300-interacting transactivator 2 (273 aa).

Positions 137–204 (DLHPAAGHQM…GSGGSGSSNM (68 aa)) are disordered. Positions 165 to 200 (STPGGSGGSSTPGGSGGSAGGGAGSSNSGGGSGGSG) are enriched in gly residues.

This sequence belongs to the CITED family. In terms of assembly, interacts (via C-terminus) with SMAD2. Interacts (via C-terminus) with SMAD3 (via MH2 domain). Interacts with LHX2 (via LIM domains). Interacts with WT1. Interacts (via C-terminus) with EP300 (via CH1 domain); the interaction is stimulated in response to hypoxia. Interacts with PPARA. Interacts (via C-terminus) with TFAP2A, TFAP2B and TFAP2C.

It localises to the nucleus. Its function is as follows. Transcriptional coactivator of the p300/CBP-mediated transcription complex. Acts as a bridge, linking TFAP2 transcription factors and the p300/CBP transcriptional coactivator complex in order to stimulate TFAP2-mediated transcriptional activation. Positively regulates TGF-beta signaling through its association with the SMAD/p300/CBP-mediated transcriptional coactivator complex. Stimulates the peroxisome proliferator-activated receptors PPARA transcriptional activity. Enhances estrogen-dependent transactivation mediated by estrogen receptors. Also acts as a transcriptional corepressor; interferes with the binding of the transcription factors HIF1A or STAT2 and the p300/CBP transcriptional coactivator complex. Participates in sex determination and early gonad development by stimulating transcription activation of SRY. Plays a role in controlling left-right patterning during embryogenesis; potentiates transcriptional activation of NODAL-mediated gene transcription in the left lateral plate mesoderm (LPM). Plays an essential role in differentiation of the adrenal cortex from the adrenogonadal primordium (AGP); stimulates WT1-mediated transcription activation thereby up-regulating the nuclear hormone receptor NR5A1 promoter activity. Associates with chromatin to the PITX2 P1 promoter region. This chain is Cbp/p300-interacting transactivator 2 (CITED2), found in Saguinus labiatus (Red-chested mustached tamarin).